A 117-amino-acid polypeptide reads, in one-letter code: Large ribosomal subunit protein bL20 (117 aa).

This sequence belongs to the bacterial ribosomal protein bL20 family.

Functionally, binds directly to 23S ribosomal RNA and is necessary for the in vitro assembly process of the 50S ribosomal subunit. It is not involved in the protein synthesizing functions of that subunit. The protein is Large ribosomal subunit protein bL20 of Campylobacter fetus subsp. fetus (strain 82-40).